The sequence spans 639 residues: Coiled-coil domain-containing protein 93 homolog (639 aa).

The interval 250 to 275 (KLESQLSGKDGSGKDTTEAEREEEEK) is disordered. Residues 260–275 (GSGKDTTEAEREEEEK) are compositionally biased toward basic and acidic residues. A coiled-coil region spans residues 332–492 (AEKLHRQKIT…KNRDISLIQR (161 aa)).

This sequence belongs to the CCDC93 family.

This chain is Coiled-coil domain-containing protein 93 homolog, found in Dictyostelium discoideum (Social amoeba).